Consider the following 358-residue polypeptide: Chorismate synthase (358 aa).

Residue Arg46 coordinates NADP(+). FMN is bound by residues 123–125 (RSS), 235–236 (NA), Gly275, 290–294 (KPTPS), and Arg316.

The protein belongs to the chorismate synthase family. As to quaternary structure, homotetramer. The cofactor is FMNH2.

The catalysed reaction is 5-O-(1-carboxyvinyl)-3-phosphoshikimate = chorismate + phosphate. The protein operates within metabolic intermediate biosynthesis; chorismate biosynthesis; chorismate from D-erythrose 4-phosphate and phosphoenolpyruvate: step 7/7. In terms of biological role, catalyzes the anti-1,4-elimination of the C-3 phosphate and the C-6 proR hydrogen from 5-enolpyruvylshikimate-3-phosphate (EPSP) to yield chorismate, which is the branch point compound that serves as the starting substrate for the three terminal pathways of aromatic amino acid biosynthesis. This reaction introduces a second double bond into the aromatic ring system. The polypeptide is Chorismate synthase (Helicobacter hepaticus (strain ATCC 51449 / 3B1)).